The sequence spans 149 residues: UPF0310 protein SSO2595 (149 aa).

Belongs to the UPF0310 family.

The chain is UPF0310 protein SSO2595 from Saccharolobus solfataricus (strain ATCC 35092 / DSM 1617 / JCM 11322 / P2) (Sulfolobus solfataricus).